Here is a 206-residue protein sequence, read N- to C-terminus: Probable glutathione S-transferase 6 (206 aa).

The 78-residue stretch at 2-79 (VHYKLVYFPL…YLAREFGIAG (78 aa)) folds into the GST N-terminal domain. Glutathione-binding positions include tyrosine 8, tryptophan 39, lysine 43, 49 to 51 (GQL), and 63 to 64 (QS). The region spanning 81–206 (NDTEAAEVDA…YIANRPDYPF (126 aa)) is the GST C-terminal domain.

It belongs to the GST superfamily. Sigma family.

The catalysed reaction is RX + glutathione = an S-substituted glutathione + a halide anion + H(+). In terms of biological role, conjugation of reduced glutathione to a wide number of exogenous and endogenous hydrophobic electrophiles. The chain is Probable glutathione S-transferase 6 (gst-6) from Caenorhabditis elegans.